The primary structure comprises 421 residues: UDP-N-acetylglucosamine 1-carboxyvinyltransferase (421 aa).

Lys-22–Asn-23 is a binding site for phosphoenolpyruvate. Arg-93 is a binding site for UDP-N-acetyl-alpha-D-glucosamine. Cys-117 serves as the catalytic Proton donor. Cys-117 carries the 2-(S-cysteinyl)pyruvic acid O-phosphothioketal modification. Residues Arg-122–Leu-126, Asp-308, and Ile-330 each bind UDP-N-acetyl-alpha-D-glucosamine.

This sequence belongs to the EPSP synthase family. MurA subfamily.

The protein resides in the cytoplasm. It carries out the reaction phosphoenolpyruvate + UDP-N-acetyl-alpha-D-glucosamine = UDP-N-acetyl-3-O-(1-carboxyvinyl)-alpha-D-glucosamine + phosphate. Its pathway is cell wall biogenesis; peptidoglycan biosynthesis. Functionally, cell wall formation. Adds enolpyruvyl to UDP-N-acetylglucosamine. In Pseudomonas fluorescens (strain ATCC BAA-477 / NRRL B-23932 / Pf-5), this protein is UDP-N-acetylglucosamine 1-carboxyvinyltransferase.